A 213-amino-acid chain; its full sequence is Ras-related protein Rab-39B (213 aa).

Residues Ser-17, Gly-20, Lys-21, Ser-22, Cys-23, Ser-37, and Thr-40 each contribute to the GTP site. A Mg(2+)-binding site is contributed by Ser-22. The switch-I stretch occupies residues 35-43; the sequence is QVSDPTVGV. Mg(2+) is bound by residues Thr-40 and Asp-64. 6 residues coordinate GTP: Gly-67, His-123, Lys-124, Asp-126, Ala-154, and Arg-155. The interval 67–83 is switch-II; it reads GQERFRSITRAYYRNSV. Ser-201 carries the phosphoserine modification. S-geranylgeranyl cysteine attachment occurs at residues Cys-211 and Cys-213. Cys-213 is subject to Cysteine methyl ester.

The protein belongs to the small GTPase superfamily. Rab family. As to quaternary structure, interacts (GDP-bound) with C9orf72; C9orf72 in complex with SMCR8 acts as a GEF for RAB39B. Interacts (in GTP-bound form) with PICK1 (via PDZ domain); a PICK1 homodimer may allow simultaneous association of RAB39B and GRIA2 to PICK1 which is involved in GRIA2 trafficking. Interacts with isoform c of RASSF1; the interaction is strong. Interacts with isoform a of RASSF1; the interaction is weak. Interacts with the DLG4/PSD-95. Interacts (GTP-bound) with HOPS complex components VPS39 and VPS41. Mg(2+) is required as a cofactor. Specifically expressed in neuron and neuronal precursors in the brain. Expression is high in all regions of the brain with highest levels observed in the hippocampus.

Its subcellular location is the cell membrane. It is found in the cytoplasmic vesicle membrane. The protein resides in the golgi apparatus. The protein localises to the cytoplasmic vesicle. It localises to the autophagosome membrane. Its subcellular location is the autolysosome membrane. It catalyses the reaction GTP + H2O = GDP + phosphate + H(+). Regulated by guanine nucleotide exchange factors (GEFs) including C9orf72-SMCR8 complex, which promote the exchange of bound GDP for free GTP. Regulated by GTPase activating proteins (GAPs) which increase the GTP hydrolysis activity. Inhibited by GDP dissociation inhibitors (GDIs). Its function is as follows. The small GTPases Rab are key regulators of intracellular membrane trafficking, from the formation of transport vesicles to their fusion with membranes. Rabs cycle between an inactive GDP-bound form and an active GTP-bound form that is able to recruit to membranes different sets of downstream effectors directly responsible for vesicle formation, movement, tethering and fusion. RAB39B is involved in autophagy and may function in autophagosome formation. Binds downstream effector PICK1 to ensure selectively GRIA2 exit from the endoplasmic reticulum to the Golgi and to regulate AMPAR composition at the post-synapses and thus synaptic transmission. May regulate the homeostasis of SNCA/alpha-synuclein. The chain is Ras-related protein Rab-39B from Mus musculus (Mouse).